A 339-amino-acid chain; its full sequence is Ferrochelatase (339 aa).

Residues H202 and E283 each contribute to the Fe cation site.

This sequence belongs to the ferrochelatase family.

Its subcellular location is the cytoplasm. It carries out the reaction heme b + 2 H(+) = protoporphyrin IX + Fe(2+). It functions in the pathway porphyrin-containing compound metabolism; protoheme biosynthesis; protoheme from protoporphyrin-IX: step 1/1. Catalyzes the ferrous insertion into protoporphyrin IX. The chain is Ferrochelatase from Psychrobacter arcticus (strain DSM 17307 / VKM B-2377 / 273-4).